Here is a 163-residue protein sequence, read N- to C-terminus: MINNVVLVGRMTRDAELRYTPSNQAVATFSLAVNRNFKNQSGEREADFINCVIWRQQAENLANWAKKGALVGITGRIQTRNYENQQGQRVYVTEVVAESFQLLESRATREGGSPNSYNNGGYNNAPSNNSYSASSQQTPNFSRDESPFGNSNPMDISDDDLPF.

Positions 1-104 (MINNVVLVGR…VVAESFQLLE (104 aa)) constitute an SSB domain. The interval 106 to 163 (RATREGGSPNSYNNGGYNNAPSNNSYSASSQQTPNFSRDESPFGNSNPMDISDDDLPF) is disordered. Residues 111–135 (GGSPNSYNNGGYNNAPSNNSYSASS) show a composition bias toward low complexity. The Important for interaction with partner proteins signature appears at 158–163 (DDDLPF).

In terms of assembly, homotetramer.

Its function is as follows. Plays an important role in DNA replication, recombination and repair. Binds to ssDNA and to an array of partner proteins to recruit them to their sites of action during DNA metabolism. This is Single-stranded DNA-binding protein 1 (ssb1) from Streptococcus agalactiae serotype III (strain NEM316).